Here is a 356-residue protein sequence, read N- to C-terminus: tRNA N6-adenosine threonylcarbamoyltransferase (356 aa).

Fe cation is bound by residues histidine 115 and histidine 119. Residues 138 to 142 (LVSGG), aspartate 171, glycine 184, and asparagine 277 contribute to the substrate site. Aspartate 305 is a Fe cation binding site.

Belongs to the KAE1 / TsaD family. Fe(2+) serves as cofactor.

The protein resides in the cytoplasm. It carries out the reaction L-threonylcarbamoyladenylate + adenosine(37) in tRNA = N(6)-L-threonylcarbamoyladenosine(37) in tRNA + AMP + H(+). In terms of biological role, required for the formation of a threonylcarbamoyl group on adenosine at position 37 (t(6)A37) in tRNAs that read codons beginning with adenine. Is involved in the transfer of the threonylcarbamoyl moiety of threonylcarbamoyl-AMP (TC-AMP) to the N6 group of A37, together with TsaE and TsaB. TsaD likely plays a direct catalytic role in this reaction. In Polaromonas naphthalenivorans (strain CJ2), this protein is tRNA N6-adenosine threonylcarbamoyltransferase.